The primary structure comprises 186 residues: Calcium-binding protein NCSA (186 aa).

4 EF-hand domains span residues 40-58 (SGTINKQEFKEIMTQMGVG), 66-93 (LFNVFDKNKDSTINFQEFVCGLSSITRG), 94-129 (TPEEKIEFAFSLYDIDGNGYITRSEMESILESMYKL), and 142-177 (DPHDLIEEFFDSMDDDGDGYISLEEYKRGTLKNPDI). Residues Asp-107, Asp-109, Asn-111, Tyr-113, Glu-118, Asp-155, Asp-157, Asp-159, Tyr-161, and Glu-166 each coordinate Ca(2+).

It belongs to the recoverin family.

May prevent cells from entering development prematurely in the presence of environmental nutrients. This is Calcium-binding protein NCSA (ncsA) from Dictyostelium discoideum (Social amoeba).